The following is a 270-amino-acid chain: tRNA pseudouridine synthase A (270 aa).

Asp52 acts as the Nucleophile in catalysis. Tyr110 contributes to the substrate binding site.

Belongs to the tRNA pseudouridine synthase TruA family. In terms of assembly, homodimer.

It carries out the reaction uridine(38/39/40) in tRNA = pseudouridine(38/39/40) in tRNA. Formation of pseudouridine at positions 38, 39 and 40 in the anticodon stem and loop of transfer RNAs. The protein is tRNA pseudouridine synthase A of Paraburkholderia xenovorans (strain LB400).